The sequence spans 163 residues: Phosphopantetheine adenylyltransferase (163 aa).

ATP-binding residues include Ser10 and His18. Ser10 serves as a coordination point for substrate. Positions 42, 75, and 89 each coordinate substrate. ATP contacts are provided by residues Gly90–Arg92, Glu100, and Tyr125–Ser131.

This sequence belongs to the bacterial CoaD family. As to quaternary structure, homohexamer. The cofactor is Mg(2+).

Its subcellular location is the cytoplasm. It carries out the reaction (R)-4'-phosphopantetheine + ATP + H(+) = 3'-dephospho-CoA + diphosphate. Its pathway is cofactor biosynthesis; coenzyme A biosynthesis; CoA from (R)-pantothenate: step 4/5. Functionally, reversibly transfers an adenylyl group from ATP to 4'-phosphopantetheine, yielding dephospho-CoA (dPCoA) and pyrophosphate. The protein is Phosphopantetheine adenylyltransferase of Enterococcus faecalis (strain ATCC 700802 / V583).